Here is a 663-residue protein sequence, read N- to C-terminus: Cytoplasmic dynein 1 intermediate chain (663 aa).

The segment covering 17 to 37 has biased composition (basic and acidic residues); that stretch reads LREEKDRRRREKEIKDMEEAA. Disordered stretches follow at residues 17–52 and 75–107; these read LREEKDRRRREKEIKDMEEAAGRIGGGAGIDKDQRK and SVNSMTSDNSNTQTPDASLQATVNGQSGGKKQP. Residues 75–85 are compositionally biased toward low complexity; the sequence is SVNSMTSDNSN. Polar residues predominate over residues 86-99; that stretch reads TQTPDASLQATVNG. WD repeat units follow at residues 311-360, 364-404, 413-454, 463-503, 508-553, 556-596, and 602-641; these read SKNR…STPE, HCQS…RTPI, AHTH…QPQD, SKAI…SGVN, RHLG…PLYS, DNSD…EVPT, and AGAPALNRVSWTPSGLHVCIGDEAGKLYVYDVAENLAQPS.

This sequence belongs to the dynein intermediate chain family. Homodimer. The cytoplasmic dynein 1 complex consists of two catalytic heavy chains (HCs) and a number of non-catalytic subunits presented by intermediate chains (ICs), light intermediate chains (LICs) and light chains (LCs). High levels of isoform 1b, isoform 1c, isoform 3a and isoform 4 accumulate in early egg chambers and at stage 9 become concentrated at the posterior of the oocyte. Isoform 5a and isoform 5b are highly expressed in adult head and to a lesser extent in adult torso. Isoform 1a, isoform 2a and isoform 2b are found in all tissues examined, including ovaries, midgut, torso and head.

It localises to the cytoplasm. It is found in the cytoskeleton. Its subcellular location is the lysosome membrane. The protein resides in the nucleus membrane. Functionally, acts as one of several non-catalytic accessory components of the cytoplasmic dynein 1 complex that are thought to be involved in linking dynein to cargos and to adapter proteins that regulate dynein function. Cytoplasmic dynein 1 acts as a motor for the intracellular retrograde motility of vesicles and organelles along microtubules. The intermediate chains mediate the help dynein bind to dynactin 150 kDa component. The protein is Cytoplasmic dynein 1 intermediate chain (sw) of Drosophila melanogaster (Fruit fly).